An 832-amino-acid chain; its full sequence is Mucosa-associated lymphoid tissue lymphoma translocation protein 1 homolog (832 aa).

Residues 1–39 (MSLWGQPLQASPPLAVRQPPTASSGPSTSPPAGATLNRL) form a disordered region. At Ser2 the chain carries N-acetylserine. Residues 19 to 39 (PPTASSGPSTSPPAGATLNRL) show a composition bias toward low complexity. The Death domain occupies 45-132 (RRLSESLDRA…EVLPLLNPPG (88 aa)). Ig-like C2-type domains lie at 131–207 (PGLK…FEFS) and 218–314 (AEVT…KKAE). Residue Ser141 is modified to Phosphoserine. 2 disulfide bridges follow: Cys154–Cys196 and Cys257–Cys299. The segment at 356 to 570 (IGNMSYWEHP…SLSEKRALTD (215 aa)) is caspase-like. Residues 377–384 (LTNLLRQL) carry the Nuclear export signal motif. Residues His423 and Cys472 contribute to the active site.

It belongs to the peptidase C14B family. As to quaternary structure, homooligomer; forms oligomers which bind to TRAF6. Forms a complex with CARD14 and MALT1; resulting in the formation of a CBM (CARD14-BCL10-MALT1) complex. Forms a complex with CARD11 and MALT1; resulting in the formation of a CBM (CARD11-BCL10-MALT1) complex. Forms a complex with CARD9 and MALT1; resulting in the formation of a CBM (CARD9-BCL10-MALT1) complex.

The protein localises to the cytoplasm. Its subcellular location is the perinuclear region. The protein resides in the nucleus. Functionally, protease that enhances BCL10-induced activation: acts via formation of CBM complexes that channel adaptive and innate immune signaling downstream of CARD domain-containing proteins (CARD9, CARD11 and CARD14) to activate NF-kappa-B and MAP kinase p38 pathways which stimulate expression of genes encoding pro-inflammatory cytokines and chemokines. Mediates BCL10 cleavage: MALT1-dependent BCL10 cleavage plays an important role in T-cell antigen receptor-induced integrin adhesion. Involved in the induction of T helper 17 cells (Th17) differentiation. Cleaves RC3H1 and ZC3H12A in response to T-cell receptor (TCR) stimulation which releases their cooperatively repressed targets to promote Th17 cell differentiation. Also mediates cleavage of N4BP1 in T-cells following TCR-mediated activation, leading to N4BP1 inactivation. May also have ubiquitin ligase activity: binds to TRAF6, inducing TRAF6 oligomerization and activation of its ligase activity. This chain is Mucosa-associated lymphoid tissue lymphoma translocation protein 1 homolog, found in Mus musculus (Mouse).